A 146-amino-acid chain; its full sequence is Hemoglobin subunit beta (146 aa).

Position 1 is an N-acetylvaline (V1). Residues 2–146 enclose the Globin domain; the sequence is HLTGEEKSAV…VANALAHKYH (145 aa). Residue T12 is modified to Phosphothreonine. S44 bears the Phosphoserine mark. Residue K59 is modified to N6-acetyllysine. Residue H63 participates in heme b binding. The residue at position 82 (K82) is an N6-acetyllysine. Position 92 (H92) interacts with heme b. C93 is modified (S-nitrosocysteine). The residue at position 144 (K144) is an N6-acetyllysine.

This sequence belongs to the globin family. In terms of assembly, heterotetramer of two alpha chains and two beta chains. Red blood cells.

Involved in oxygen transport from the lung to the various peripheral tissues. In Saguinus mystax (Moustached tamarin), this protein is Hemoglobin subunit beta (HBB).